Consider the following 744-residue polypeptide: C-type polyheme cytochrome OmcB (744 aa).

The N-terminal stretch at 1–23 is a signal peptide; the sequence is MSRKVTKYSAVLAVSLFAAALAG. Residue Cys-24 is the site of N-palmitoyl cysteine attachment. Cys-24 carries S-diacylglycerol cysteine lipidation. Cys-48, Cys-51, His-52, Cys-81, Cys-84, His-85, Cys-107, Cys-110, His-111, Cys-141, Cys-144, His-145, Cys-185, Cys-188, His-189, Cys-225, Cys-228, His-229, Cys-303, Cys-306, His-307, Cys-382, Cys-385, His-386, Cys-430, Cys-433, His-434, Cys-480, Cys-483, His-484, Cys-555, Cys-558, His-559, Cys-587, Cys-590, and His-591 together coordinate heme c.

Post-translationally, binds 12 heme c groups per subunit.

It is found in the cell outer membrane. Functionally, involved in anaerobic respiration with Fe(3+) as terminal electron acceptor. Acts as an electron-transport mediator in the dissimilatory reduction of Fe(3+). The sequence is that of C-type polyheme cytochrome OmcB (omcB) from Geobacter sulfurreducens (strain DL-1 / KN400).